The chain runs to 209 residues: MMKSVFFGVVAITVAILSIYQETAQAQEQTVGATDNYQWDSVDDQCLAALHRQINKEFDASIIYLKYAAYFAQEKINLPGFEKFFFHSAAEEREHGIKLIEYALMRGKAPVDKHFKLNYDHEVPTVTTGESALETALQKEVEVTKSIRGVIKACEDGSNDFHLADYLTGEYLDEQHKGQRELAEKIATLKKMKKSAPKLGEFLFDKNHM.

The N-terminal stretch at 1-27 is a signal peptide; that stretch reads MMKSVFFGVVAITVAILSIYQETAQAQ. The region spanning 40–193 is the Ferritin-like diiron domain; that stretch reads DSVDDQCLAA…EKIATLKKMK (154 aa). The Fe cation site is built by glutamate 57, glutamate 92, histidine 95, glutamate 140, and glutamine 175.

This sequence belongs to the ferritin family. As to quaternary structure, oligomer of 24 subunits. There are two types of subunits: L (light) chain and H (heavy) chain. The functional molecule forms a roughly spherical shell with a diameter of 12 nm and contains a central cavity into which the insoluble mineral iron core is deposited.

The protein resides in the secreted. It is found in the cytoplasm. The enzyme catalyses 4 Fe(2+) + O2 + 4 H(+) = 4 Fe(3+) + 2 H2O. Its function is as follows. Stores iron in a soluble, non-toxic, readily available form. Important for iron homeostasis. Has ferroxidase activity. Iron is taken up in the ferrous form and deposited as ferric hydroxides after oxidation. The chain is Ferritin heavy chain (FERH) from Aedes aegypti (Yellowfever mosquito).